A 380-amino-acid chain; its full sequence is Ubiquitin-like protein 7 (380 aa).

One can recognise a Ubiquitin-like domain in the interval 18–98; the sequence is APKSILQLPE…VLRKSWPEPD (81 aa). Positions 200–313 are disordered; the sequence is TPMPGADSSS…SSGVQSGTPI (114 aa). Over residues 206 to 221 the composition is skewed to low complexity; sequence DSSSRSMPSSSYRDMP. Residue Ser-230 is modified to Phosphoserine. 2 stretches are compositionally biased toward low complexity: residues 239 to 253 and 270 to 293; these read STRSTPSSSTPSSRP and SELATALALASTPESSSHTPTPGT. Polar residues predominate over residues 294–313; sequence QGHSSGTSPMSSGVQSGTPI. Residues 333–377 enclose the UBA domain; it reads SLQIQWQPQLQQLRDMGIQDDELSLRALQATGGDIQAALELIFAG.

Binds ubiquitin. Interacts with MAVS; this interaction enhances TRIM21-dependent 'Lys-27'-linked polyubiquitination of MAVS. Deubiquitinated by OTUD4 which stabilizes UBL7 expression.

In terms of biological role, interferon-stimulated protein that positively regulates RNA virus-triggered innate immune signaling. Mechanistically, promotes 'Lys-27'-linked polyubiquitination of MAVS through TRIM21 leading to enhanced the IFN signaling pathway. The chain is Ubiquitin-like protein 7 (Ubl7) from Mus musculus (Mouse).